The following is a 431-amino-acid chain: Glutamate--tRNA ligase 1 (431 aa).

The short motif at 6–16 (PSPTGDMHIGN) is the 'HIGH' region element. Residues 235 to 239 (KMSKR) carry the 'KMSKS' region motif. Lysine 238 is an ATP binding site.

The protein belongs to the class-I aminoacyl-tRNA synthetase family. Glutamate--tRNA ligase type 1 subfamily. As to quaternary structure, monomer.

Its subcellular location is the cytoplasm. The enzyme catalyses tRNA(Glu) + L-glutamate + ATP = L-glutamyl-tRNA(Glu) + AMP + diphosphate. Functionally, catalyzes the attachment of glutamate to tRNA(Glu) in a two-step reaction: glutamate is first activated by ATP to form Glu-AMP and then transferred to the acceptor end of tRNA(Glu). The polypeptide is Glutamate--tRNA ligase 1 (Campylobacter jejuni subsp. jejuni serotype O:6 (strain 81116 / NCTC 11828)).